The sequence spans 805 residues: Probable phosphoketolase (805 aa).

The protein belongs to the XFP family. Thiamine diphosphate is required as a cofactor.

The chain is Probable phosphoketolase from Synechocystis sp. (strain ATCC 27184 / PCC 6803 / Kazusa).